A 144-amino-acid polypeptide reads, in one-letter code: Large ribosomal subunit protein uL16 (144 aa).

Over residues 1–16 the composition is skewed to basic residues; it reads MLIPKRVKYRKQHRPR. The segment at 1 to 25 is disordered; sequence MLIPKRVKYRKQHRPRGNGGVSKGG.

This sequence belongs to the universal ribosomal protein uL16 family. In terms of assembly, part of the 50S ribosomal subunit.

Functionally, binds 23S rRNA and is also seen to make contacts with the A and possibly P site tRNAs. This chain is Large ribosomal subunit protein uL16, found in Desulforamulus reducens (strain ATCC BAA-1160 / DSM 100696 / MI-1) (Desulfotomaculum reducens).